The sequence spans 1247 residues: ABC transporter B family member 14 (1247 aa).

The region spanning 48 to 337 (MFLGGLGTCI…AVPSLSAISK (290 aa)) is the ABC transmembrane type-1 1 domain. A run of 6 helical transmembrane segments spans residues 49-69 (FLGG…FVFF), 95-115 (LYLV…VACW), 172-192 (HVLR…LSVW), 196-216 (LLTL…AIVM), 277-297 (LGVG…FWYA), and 315-335 (ILNV…LSAI). Residues N362 and N392 are each glycosylated (N-linked (GlcNAc...) asparagine). The ABC transporter 1 domain occupies 373 to 608 (IEFCGVSFAY…GGDYATLVNC (236 aa)). 407–414 (GPSGSGKS) is an ATP binding site. The ABC transmembrane type-1 2 domain maps to 679–971 (EWLYALLGSI…TLALTPDIVK (293 aa)). 2 consecutive transmembrane segments (helical) span residues 680 to 700 (WLYA…PALF) and 727 to 747 (AIIF…QHYF). N780 carries an N-linked (GlcNAc...) asparagine glycan. A run of 3 helical transmembrane segments spans residues 807–824 (IVQN…AFFY), 830–850 (AVVT…QLFL), and 915–935 (LSQC…SVLI). N-linked (GlcNAc...) asparagine glycosylation is present at N938. Residues 949–969 (FMVLLVTAYSVAETLALTPDI) form a helical membrane-spanning segment. The ABC transporter 2 domain occupies 1006–1242 (IEFRNVSFAY…SDGFYKKLTS (237 aa)). N1010 is a glycosylation site (N-linked (GlcNAc...) asparagine). 1041-1048 (GPSGSGKS) serves as a coordination point for ATP. Residue N1108 is glycosylated (N-linked (GlcNAc...) asparagine).

The protein belongs to the ABC transporter superfamily. ABCB family. Multidrug resistance exporter (TC 3.A.1.201) subfamily.

The protein resides in the membrane. The protein is ABC transporter B family member 14 (ABCB14) of Arabidopsis thaliana (Mouse-ear cress).